The following is a 296-amino-acid chain: Galectin-3 (296 aa).

Polar residues predominate over residues 1 to 11 (MADSFSLNDAL). Residues 1–150 (MADSFSLNDA…PSAPGAYPAA (150 aa)) are disordered. Position 2 is an N-acetylalanine (A2). A phosphoserine; by CK1 mark is found at S6 and S12. Composition is skewed to low complexity over residues 12–31 (SGSGNPNPQGWPGPWGNQPA) and 38–47 (GASYPGAYPG). Repeat copies occupy residues 36 to 44 (YPGASYPGA), 45 to 53 (YPGQAPPGG), 54 to 62 (YPGQAPPGG), 63 to 71 (YPGQAPPGG), 72 to 80 (YPGQAPPGG), 81 to 89 (YPGQAPPGG), 90 to 98 (YPGQAPPGG), and 99 to 107 (YPGQAPPGT). The segment at 36–143 (YPGASYPGAY…AYPPPGQPSA (108 aa)) is 12 X 9 AA tandem repeats of Y-P-G-X(3)-P-G-[GAT]. Residues 48 to 120 (QAPPGGYPGQ…PTAPAYPGPT (73 aa)) are compositionally biased toward pro residues. A 9; approximate repeat occupies 108-115 (YPGPTAPA). Residues 116 to 124 (YPGPTAPGT) form repeat 10. A compositionally biased stretch (low complexity) spans 121–133 (APGTQPGQPSGPG). The stretch at 125–134 (QPGQPSGPGA) is one 11; approximate repeat. The stretch at 135-143 (YPPPGQPSA) is one 12; approximate repeat. The Galectin domain maps to 164-294 (YDLPLPGGVK…DIDLTSASYA (131 aa)). 227–233 (WGKEERQ) provides a ligand contact to a beta-D-galactoside. The Nuclear export signal signature appears at 272–287 (KNLPEISKLGISGDID).

As to quaternary structure, probably forms homo- or heterodimers. Interacts with DMBT1. Interacts with CD6 and ALCAM. Forms a complex with the ITGA3, ITGB1 and CSPG4. Interacts with LGALS3BP, LYPD3, ZFTRAF1 and UACA. Interacts with TRIM16; this interaction mediates autophagy of damage endomembranes. Interacts with cargo receptor TMED10; the interaction mediates the translocation from the cytoplasm into the ERGIC (endoplasmic reticulum-Golgi intermediate compartment) and thereby secretion. Interacts with and inhibits by binding NCR3/NKp30. In terms of processing, the degree of phosphorylation is higher in the cytoplasmic form than in the nuclear form. In protein isolated from a canine kidney cell line, 90% of the phosphate was on Ser-6 and 10% was on Ser-12.

It is found in the cytoplasm. The protein resides in the nucleus. The protein localises to the secreted. Functionally, galactose-specific lectin which binds IgE. May mediate with the alpha-3, beta-1 integrin the stimulation by CSPG4 of endothelial cells migration. Together with DMBT1, required for terminal differentiation of columnar epithelial cells during early embryogenesis. In the nucleus: acts as a pre-mRNA splicing factor. Involved in acute inflammatory responses including neutrophil activation and adhesion, chemoattraction of monocytes macrophages, opsonization of apoptotic neutrophils, and activation of mast cells. Together with TRIM16, coordinates the recognition of membrane damage with mobilization of the core autophagy regulators ATG16L1 and BECN1 in response to damaged endomembranes. When secreted, interacts with NK cell-activating receptor NCR3/NKp30 acting as an inhibitory ligand which antagonizes NK cell attack. In Canis lupus familiaris (Dog), this protein is Galectin-3 (LGALS3).